The primary structure comprises 55 residues: ATP synthase F(0) complex subunit 8 (55 aa).

The chain crosses the membrane as a helical span at residues 7–24 (NPWFYIMLMSWLTFSLII). Positions 35–55 (NPPSNKTSTTTRTLPWTWPWT) are disordered. Over residues 41–55 (TSTTTRTLPWTWPWT) the composition is skewed to low complexity.

Belongs to the ATPase protein 8 family. Component of the ATP synthase complex composed at least of ATP5F1A/subunit alpha, ATP5F1B/subunit beta, ATP5MC1/subunit c (homooctomer), MT-ATP6/subunit a, MT-ATP8/subunit 8, ATP5ME/subunit e, ATP5MF/subunit f, ATP5MG/subunit g, ATP5MK/subunit k, ATP5MJ/subunit j, ATP5F1C/subunit gamma, ATP5F1D/subunit delta, ATP5F1E/subunit epsilon, ATP5PF/subunit F6, ATP5PB/subunit b, ATP5PD/subunit d, ATP5PO/subunit OSCP. ATP synthase complex consists of a soluble F(1) head domain (subunits alpha(3) and beta(3)) - the catalytic core - and a membrane F(0) domain - the membrane proton channel (subunits c, a, 8, e, f, g, k and j). These two domains are linked by a central stalk (subunits gamma, delta, and epsilon) rotating inside the F1 region and a stationary peripheral stalk (subunits F6, b, d, and OSCP).

Its subcellular location is the mitochondrion membrane. Its function is as follows. Subunit 8, of the mitochondrial membrane ATP synthase complex (F(1)F(0) ATP synthase or Complex V) that produces ATP from ADP in the presence of a proton gradient across the membrane which is generated by electron transport complexes of the respiratory chain. ATP synthase complex consist of a soluble F(1) head domain - the catalytic core - and a membrane F(1) domain - the membrane proton channel. These two domains are linked by a central stalk rotating inside the F(1) region and a stationary peripheral stalk. During catalysis, ATP synthesis in the catalytic domain of F(1) is coupled via a rotary mechanism of the central stalk subunits to proton translocation. In vivo, can only synthesize ATP although its ATP hydrolase activity can be activated artificially in vitro. Part of the complex F(0) domain. The polypeptide is ATP synthase F(0) complex subunit 8 (Corythaixoides concolor (Grey go-away-bird)).